The following is a 217-amino-acid chain: Tegument protein BKRF4 (217 aa).

A disordered region spans residues 1 to 217; sequence MAMFLKSRGV…GNNNYNWPWL (217 aa). Residues 32 to 42 show a composition bias toward polar residues; the sequence is YTLGSQASQSI. Over residues 43-79 the composition is skewed to acidic residues; the sequence is QEEDVSDTDESDYSDEDEEIDLEEEYPSDEDPSEGSD. The tract at residues 63–64 is interaction with host histones H3/H4; sequence DL. Positions 81–84 are interaction with host H2A/H2B; that stretch reads DPSW. The segment covering 89–102 has biased composition (acidic residues); sequence SDESDYSESDEDEA. Low complexity predominate over residues 106 to 132; the sequence is SQASRSSRVSPSTQQSSGLTPTPSFSR. Pro residues predominate over residues 136-145; sequence RAPPRPPAPA. Residues 208 to 217 are compositionally biased toward polar residues; that stretch reads GNNNYNWPWL.

Belongs to the lymphocryptovirus BKRF4 family. In terms of assembly, forms a complex with the host H3/H4 dimer and histone chaperone ASF1. Also forms a complex with host H2A/H2B dimer. Interacts (via C-terminus) with BGLF2; this interaction is important for infectious virion production.

It is found in the virion tegument. The protein resides in the host nucleus. It localises to the host cytoplasm. Its subcellular location is the host perinuclear region. In terms of biological role, histone-binding protein that binds to histones H2A/H2B, H3/H4 and cellular chromatin to overcome the host DNA damage response triggered by the viral genome ends. Interferes with histone ubiquitination and recruitment of repair proteins. The protein is Tegument protein BKRF4 of Epstein-Barr virus (strain AG876) (HHV-4).